The chain runs to 495 residues: Inner membrane ALBINO3-like protein 1, chloroplastic (495 aa).

The chain crosses the membrane as a helical span at residues 76–96 (LGAIYVLADASASTAAAAVMP). The Stromal portion of the chain corresponds to 97–206 (TAVDSAAGAA…VLYEQAGVNP (110 aa)). The chain crosses the membrane as a helical span at residues 207–227 (LAGCLPTLATIPIFIGLFSSL). Residues 228-273 (TNVANDGLLDTQGFYFVPSLAGPTTMAMRQSGLGTSWLWPLGPDGA) are Lumenal-facing. The chain crosses the membrane as a helical span at residues 274–294 (PPIGWEDAAAYLTLPLLLVAV). The Stromal portion of the chain corresponds to 295 to 317 (QYASSSVTSPPIDPKDENANTQR). The chain crosses the membrane as a helical span at residues 318–338 (ALLVFLPLMVGWFSLNVPAGL). Residues 339 to 441 (SLYYLANTVL…ASVSLSVDDS (103 aa)) lie on the Lumenal side of the membrane. The helical transmembrane segment at 442–462 (TAAIAGTATMAVTAGAPAAAM) threads the bilayer. Residues 463–495 (DPSKVNRRCKRRRLTSLVQDGSTASAAVAGASA) lie on the Stromal side of the membrane.

Belongs to the OXA1/ALB3/YidC (TC 2.A.9.2) family. Associates with the LHCII complex and with the psaE subunit of the LHCI complex.

Its subcellular location is the plastid. The protein localises to the chloroplast thylakoid membrane. In terms of biological role, required for the insertion of some light-harvesting complexes (LHC) proteins into the chloroplast thylakoid membrane. Essential for the assembly and activity of LHC I and II. Its function is probably partly distinct from that of ALB3.2. This is Inner membrane ALBINO3-like protein 1, chloroplastic (ALB3.1) from Chlamydomonas reinhardtii (Chlamydomonas smithii).